The sequence spans 1257 residues: Liprin-alpha-2 (1257 aa).

A disordered region spans residues 1–29 (MMCEVMPTINEDTPMSQRGSQSSGSDSDS). The segment covering 16 to 26 (SQRGSQSSGSD) has biased composition (low complexity). Coiled coils occupy residues 29–154 (SHFE…SLRM) and 185–235 (KALD…SSEG). At S236 the chain carries Phosphoserine. Position 237 is a phosphothreonine (T237). The residue at position 239 (S239) is a Phosphoserine. 2 coiled-coil regions span residues 264–541 (TDDT…SLIE) and 643–695 (HSDA…GLNL). Positions 439-463 (GQLEEKNQELQRARQREKMNEEHNK) are disordered. 2 positions are modified to phosphoserine: S687 and S689. The segment covering 709–725 (TASSLASSSPPSGHSTP) has biased composition (low complexity). Disordered stretches follow at residues 709–738 (TASSLASSSPPSGHSTPKLTPRSPAREMDR) and 759–834 (EEDG…KSSI). Residues 787-802 (TLPSSYHNDARSSLSA) show a composition bias toward polar residues. 2 positions are modified to phosphoserine: S817 and S820. 3 SAM domains span residues 898 to 964 (WDGP…MVSL), 1020 to 1084 (NHEW…LKRL), and 1108 to 1177 (WSND…LLAL). Residues 1081–1107 (LKRLNYDRKELERRREASQHEIKDVLV) adopt a coiled-coil conformation.

This sequence belongs to the liprin family. Liprin-alpha subfamily. As to quaternary structure, forms homodimers and heterodimers with liprins-alpha and liprins-beta. Interacts with the second PTPase domain of PTPRD, PTPRF and PTPRS. Interacts with KIF1A; the interaction decreases in presence of calcium.

Its subcellular location is the cytoplasm. It localises to the cell surface. It is found in the cell projection. The protein localises to the dendritic spine. Alters PTPRF cellular localization and induces PTPRF clustering. May regulate the disassembly of focal adhesions. May localize receptor-like tyrosine phosphatases type 2A at specific sites on the plasma membrane, possibly regulating their interaction with the extracellular environment and their association with substrates. In neuronal cells, is a scaffolding protein in the dendritic spines which acts as immobile postsynaptic post able to recruit KIF1A-driven dense core vesicles to dendritic spines. The sequence is that of Liprin-alpha-2 (Ppfia2) from Mus musculus (Mouse).